The primary structure comprises 184 residues: Tumor necrosis factor alpha-induced protein 8-like protein 2 (184 aa).

The residue at position 3 (serine 3) is a Phosphoserine.

This sequence belongs to the TNFAIP8 family. TNFAIP8L2 subfamily. May interact with CASP8; however, such result is unclear since could not reproduce the interaction with CASP8. Interacts with RAC1. Phosphorylated by TAK1/MAP3K7; this phosphorylation triggers association with BTRC and subsequent ubiquitination and degradation. In terms of processing, ubiquitinated in a BTRC-depdent manner; leading to degradation mediated through the proteasome pathway.

The protein resides in the cytoplasm. It is found in the nucleus. Its subcellular location is the lysosome. Its function is as follows. Acts as a negative regulator of innate and adaptive immunity by maintaining immune homeostasis. Plays a regulatory role in the Toll-like signaling pathway by determining the strength of LPS-induced signaling and gene expression. Inhibits TCR-mediated T-cell activation and negatively regulate T-cell function to prevent hyperresponsiveness. Also inhibits autolysosome formation via negatively modulating MTOR activation by interacting with RAC1 and promoting the disassociation of the RAC1-MTOR complex. Plays an essential role in NK-cell biology by acting as a checkpoint and displaying an expression pattern correlating with NK-cell maturation process and by negatively regulating NK-cell maturation and antitumor immunity. Mechanistically, suppresses IL-15-triggered mTOR activity in NK-cells. The sequence is that of Tumor necrosis factor alpha-induced protein 8-like protein 2 (TNFAIP8L2) from Oryctolagus cuniculus (Rabbit).